The primary structure comprises 85 residues: Large ribosomal subunit protein bL27 (85 aa).

The disordered stretch occupies residues 1-22 (MAHKKGGGSSRNGRDSNAQRRG).

This sequence belongs to the bacterial ribosomal protein bL27 family.

The protein is Large ribosomal subunit protein bL27 of Sorangium cellulosum (strain So ce56) (Polyangium cellulosum (strain So ce56)).